The chain runs to 212 residues: Large ribosomal subunit protein bL25 (212 aa).

The tract at residues 183–212 (HDLPVASIHKPKGAKADDAEGEEGEEGGEE) is disordered. Residues 201–212 (AEGEEGEEGGEE) are compositionally biased toward acidic residues.

It belongs to the bacterial ribosomal protein bL25 family. CTC subfamily. Part of the 50S ribosomal subunit; part of the 5S rRNA/L5/L18/L25 subcomplex. Contacts the 5S rRNA. Binds to the 5S rRNA independently of L5 and L18.

Functionally, this is one of the proteins that binds to the 5S RNA in the ribosome where it forms part of the central protuberance. This chain is Large ribosomal subunit protein bL25, found in Marinobacter nauticus (strain ATCC 700491 / DSM 11845 / VT8) (Marinobacter aquaeolei).